Reading from the N-terminus, the 148-residue chain is Large ribosomal subunit protein bL9 (148 aa).

This sequence belongs to the bacterial ribosomal protein bL9 family.

Its function is as follows. Binds to the 23S rRNA. This is Large ribosomal subunit protein bL9 from Pseudomonas fluorescens (strain ATCC BAA-477 / NRRL B-23932 / Pf-5).